Consider the following 243-residue polypeptide: Carboxy-S-adenosyl-L-methionine synthase (243 aa).

Residues Tyr40, 65–67 (GCS), 90–91 (DN), 118–119 (DI), Asn133, and Arg200 each bind S-adenosyl-L-methionine.

Belongs to the class I-like SAM-binding methyltransferase superfamily. Cx-SAM synthase family. Homodimer.

It carries out the reaction prephenate + S-adenosyl-L-methionine = carboxy-S-adenosyl-L-methionine + 3-phenylpyruvate + H2O. Its function is as follows. Catalyzes the conversion of S-adenosyl-L-methionine (SAM) to carboxy-S-adenosyl-L-methionine (Cx-SAM). The sequence is that of Carboxy-S-adenosyl-L-methionine synthase from Shewanella amazonensis (strain ATCC BAA-1098 / SB2B).